Consider the following 847-residue polypeptide: Protein IRS1 (847 aa).

Disordered stretches follow at residues 1-82 (MAQR…NFWH), 607-627 (WLMEQPPPPSRQTKPDAATMP), and 715-847 (QVIP…HVHH). Gly residues predominate over residues 16 to 25 (RGRGAGGPSG). Over residues 26–56 (VGSSPPSSCVPMGATSTAGTGASAAPTATPG) the composition is skewed to low complexity. Positions 723-733 (EPEDDDEDPTY) are enriched in acidic residues. Positions 833–847 (RPKKCQTHAPHHVHH) are enriched in basic residues.

The protein belongs to the herpesviridae US22 family. In terms of assembly, interacts (via N-terminus) with the viral DNA polymerase accessory subunit UL44. Interacts (via C-terminus) with host EIF2AK2.

The protein localises to the virion. The protein resides in the host cytoplasm. It localises to the host nucleus. Functionally, acts as a transactivator along with IE2, and is required for oriLyt-dependent DNA replication in the transient transfection replication assay using native promoters. This Human cytomegalovirus (strain Merlin) (HHV-5) protein is Protein IRS1 (IRS1).